We begin with the raw amino-acid sequence, 62 residues long: Metallothionein-4 (62 aa).

C6, C8, C14, C16, C20, C22, C25, C27, C34, C35, C37, C38, C42, C45, C49, C51, C58, C60, and C61 together coordinate a divalent metal cation.

This sequence belongs to the metallothionein superfamily. Type 1 family.

In terms of biological role, seems to bind zinc and copper. Could play a special role in regulating zinc metabolism during the differentiation of stratified epithelia. The protein is Metallothionein-4 (MT4) of Homo sapiens (Human).